The sequence spans 435 residues: 5-methylthioadenosine/S-adenosylhomocysteine deaminase (435 aa).

The Zn(2+) site is built by His-65 and His-67. Substrate contacts are provided by Glu-94, Arg-150, and His-189. His-216 is a binding site for Zn(2+). Residues Glu-219 and Asp-304 each coordinate substrate. Zn(2+) is bound at residue Asp-304.

This sequence belongs to the metallo-dependent hydrolases superfamily. MTA/SAH deaminase family. The cofactor is Zn(2+).

It carries out the reaction S-adenosyl-L-homocysteine + H2O + H(+) = S-inosyl-L-homocysteine + NH4(+). The catalysed reaction is S-methyl-5'-thioadenosine + H2O + H(+) = S-methyl-5'-thioinosine + NH4(+). Its function is as follows. Catalyzes the deamination of 5-methylthioadenosine and S-adenosyl-L-homocysteine into 5-methylthioinosine and S-inosyl-L-homocysteine, respectively. Is also able to deaminate adenosine. This chain is 5-methylthioadenosine/S-adenosylhomocysteine deaminase, found in Bacillus cereus (strain 03BB102).